The primary structure comprises 266 residues: Glutamate racemase (266 aa).

Substrate contacts are provided by residues 9–10 and 41–42; these read DS and YG. Catalysis depends on C72, which acts as the Proton donor/acceptor. 73 to 74 is a binding site for substrate; the sequence is NT. The active-site Proton donor/acceptor is C184. 185–186 contributes to the substrate binding site; sequence TH.

This sequence belongs to the aspartate/glutamate racemases family.

The enzyme catalyses L-glutamate = D-glutamate. It functions in the pathway cell wall biogenesis; peptidoglycan biosynthesis. In terms of biological role, provides the (R)-glutamate required for cell wall biosynthesis. The polypeptide is Glutamate racemase (Staphylococcus carnosus (strain TM300)).